The chain runs to 341 residues: Diguanylate cyclase DgcP (341 aa).

Residues 18–154 (SLESLVRQLL…LFAGLIAQYI (137 aa)) enclose the GAF domain. The GGDEF domain occupies 204–337 (HKIMIAFIDL…KQKTPFVAHP (134 aa)). Position 212 (aspartate 212) interacts with Mg(2+). The substrate site is built by asparagine 220, histidine 225, and aspartate 229. Aspartate 255 serves as a coordination point for Mg(2+). The active-site Proton acceptor is the aspartate 255.

In terms of assembly, homodimer. The cofactor is Mg(2+).

It carries out the reaction 2 GTP = 3',3'-c-di-GMP + 2 diphosphate. It participates in purine metabolism; 3',5'-cyclic di-GMP biosynthesis. Functionally, catalyzes the synthesis of cyclic-di-GMP (c-di-GMP) via the condensation of 2 GTP molecules. Cyclic-di-GMP is a second messenger which controls cell surface-associated traits in bacteria. In Escherichia coli (strain K12), this protein is Diguanylate cyclase DgcP.